The chain runs to 461 residues: Photosystem II CP43 reaction center protein (461 aa).

The propeptide occupies 1–2 (ME). T3 is modified (N-acetylthreonine). Position 3 is a phosphothreonine (T3). The next 5 membrane-spanning stretches (helical) occupy residues 57 to 81 (LFEV…PHLA), 122 to 143 (LIGP…KDKN), 166 to 188 (KAMY…RIIT), 243 to 263 (TPWP…LSYS), and 279 to 300 (WFNN…ASQS). Residue E355 coordinates [CaMn4O5] cluster. The chain crosses the membrane as a helical span at residues 435 to 459 (RARAAAAGFEKGIDRLDEPVLSMRP).

Belongs to the PsbB/PsbC family. PsbC subfamily. As to quaternary structure, PSII is composed of 1 copy each of membrane proteins PsbA, PsbB, PsbC, PsbD, PsbE, PsbF, PsbH, PsbI, PsbJ, PsbK, PsbL, PsbM, PsbT, PsbX, PsbY, PsbZ, Psb30/Ycf12, at least 3 peripheral proteins of the oxygen-evolving complex and a large number of cofactors. It forms dimeric complexes. The cofactor is Binds multiple chlorophylls and provides some of the ligands for the Ca-4Mn-5O cluster of the oxygen-evolving complex. It may also provide a ligand for a Cl- that is required for oxygen evolution. PSII binds additional chlorophylls, carotenoids and specific lipids..

It localises to the plastid. The protein resides in the chloroplast thylakoid membrane. Functionally, one of the components of the core complex of photosystem II (PSII). It binds chlorophyll and helps catalyze the primary light-induced photochemical processes of PSII. PSII is a light-driven water:plastoquinone oxidoreductase, using light energy to abstract electrons from H(2)O, generating O(2) and a proton gradient subsequently used for ATP formation. The sequence is that of Photosystem II CP43 reaction center protein from Tetradesmus obliquus (Green alga).